We begin with the raw amino-acid sequence, 133 residues long: MSWQTYVDDHLMCDIEGTGQHLTSAAIFGTDGTVWAKSASFPEFKPNEIDAIIKEFNEAGQLAPTGLFLGGAKYMVIQGEAGAVIRGKKGAGGICIKKTGQAMVFGIYDEPVAPGQCNMVVERLGDYLLDQGM.

A disulfide bridge connects residues cysteine 95 and cysteine 117.

It belongs to the profilin family. In terms of assembly, dimer and tetramer. Occurs in many kinds of cells as a complex with monomeric actin in a 1:1 ratio.

Its subcellular location is the cytoplasm. It is found in the cytoskeleton. Binds to actin and affects the structure of the cytoskeleton. At high concentrations, profilin prevents the polymerization of actin, whereas it enhances it at low concentrations. By binding to PIP2, it inhibits the formation of IP3 and DG. Possesses high binding affinity for poly(L-proline). This is Profilin-1 from Artemisia vulgaris (Mugwort).